Here is a 268-residue protein sequence, read N- to C-terminus: Cytochrome c oxidase subunit 3 (268 aa).

Transmembrane regions (helical) follow at residues 19–39 (PWPI…VLTM), 49–69 (FDLG…DIVI), 85–105 (LIIG…SVFW), 124–144 (PVGI…IILL), 165–185 (SIIG…FQAF), 202–222 (VFFA…LFLF), and 245–265 (ILYW…VYFW).

The protein belongs to the cytochrome c oxidase subunit 3 family. As to quaternary structure, component of the cytochrome c oxidase (complex IV, CIV), a multisubunit enzyme composed of a catalytic core of 3 subunits and several supernumerary subunits. The complex exists as a monomer or a dimer and forms supercomplexes (SCs) in the inner mitochondrial membrane with ubiquinol-cytochrome c oxidoreductase (cytochrome b-c1 complex, complex III, CIII).

It localises to the mitochondrion inner membrane. It carries out the reaction 4 Fe(II)-[cytochrome c] + O2 + 8 H(+)(in) = 4 Fe(III)-[cytochrome c] + 2 H2O + 4 H(+)(out). Its function is as follows. Component of the cytochrome c oxidase, the last enzyme in the mitochondrial electron transport chain which drives oxidative phosphorylation. The respiratory chain contains 3 multisubunit complexes succinate dehydrogenase (complex II, CII), ubiquinol-cytochrome c oxidoreductase (cytochrome b-c1 complex, complex III, CIII) and cytochrome c oxidase (complex IV, CIV), that cooperate to transfer electrons derived from NADH and succinate to molecular oxygen, creating an electrochemical gradient over the inner membrane that drives transmembrane transport and the ATP synthase. Cytochrome c oxidase is the component of the respiratory chain that catalyzes the reduction of oxygen to water. Electrons originating from reduced cytochrome c in the intermembrane space (IMS) are transferred via the dinuclear copper A center (CU(A)) of subunit 2 and heme A of subunit 1 to the active site in subunit 1, a binuclear center (BNC) formed by heme A3 and copper B (CU(B)). The BNC reduces molecular oxygen to 2 water molecules using 4 electrons from cytochrome c in the IMS and 4 protons from the mitochondrial matrix. The polypeptide is Cytochrome c oxidase subunit 3 (COIII) (Schizophyllum commune (Split gill fungus)).